Here is a 1071-residue protein sequence, read N- to C-terminus: SLIT-ROBO Rho GTPase-activating protein 2 (1071 aa).

The 304-residue stretch at 22–325 folds into the F-BAR domain; it reads KEIRAQLTEQ…AVENLDATSD (304 aa). Over residues 181–203 the composition is skewed to basic and acidic residues; it reads LKEAEKQEEKQIGKSVKQEDRQT. Residues 181–211 are disordered; it reads LKEAEKQEEKQIGKSVKQEDRQTPRSPDSTA. Position 206 is a phosphoserine (S206). Residues 362–401 are a coiled coil; the sequence is VQSELVQRCQQLQSRLSTLKIENEEVKKTMEATLQTIQDI. Phosphoserine occurs at positions 427, 500, 691, and 695. The 191-residue stretch at 489 to 679 folds into the Rho-GAP domain; sequence ARRSSTVRKQ…TIIIQHENIF (191 aa). Residues 698 to 726 are disordered; it reads DYCDSPHGETTSVEDSTQDVTAEHHTSDD. The segment covering 705–717 has biased composition (polar residues); the sequence is GETTSVEDSTQDV. Position 724 is a phosphoserine (S724). An SH3 domain is found at 728-787; the sequence is CEPIEAIAKFDYVGRTARELSFKKGASLLLYQRASDDWWEGRHNGIDGLIPHQYIVVQDT. S795 carries the post-translational modification Phosphoserine. The interval 837–936 is disordered; the sequence is QRKRPESGSI…RSKSFNNHRP (100 aa). Low complexity predominate over residues 855–866; it reads HGLSSSLTDSSS. 2 stretches are compositionally biased toward polar residues: residues 874 to 885 and 897 to 907; these read RPSSQPIMSQSL and GHGSLNSISRH. Residue S916 is modified to Phosphoserine. Residues 919–933 are compositionally biased toward polar residues; that stretch reads IRKTATAGRSKSFNN. Position 927 is a symmetric dimethylarginine; by PRMT5 (R927). A Phosphoserine modification is found at S930. Residues 940-967 adopt a coiled-coil conformation; it reads EVIAQDIEATMNSALNELRELERQSSVK. The interval 983–1012 is disordered; it reads SPVVAPTSEPSSPLHTQLLKDPEPAFQRSA. A phosphoserine mark is found at S990, S994, S1013, and S1027. The segment at 1029 to 1071 is disordered; it reads KMAAPVKPPATRPKPTVFPKTNATSPGVNSSTSPQSTDKSCTV. Residues 1047–1071 are compositionally biased toward polar residues; that stretch reads PKTNATSPGVNSSTSPQSTDKSCTV.

Homodimer. Heterodimer; forms a heterodimer with SRGAP2C, altering SRGAP2 function. Forms a heterooligomer with SRGAP1 and SRGAP3 through its F-BAR domain. Interacts (via SH3 domain) with GPHN. Interacts (via SH3 domain) with FMNL1 (activated by RAC1); regulates the actin filament severing activity of FMNL1 and actin dynamics. Interacts (via SH3 domain) with FMNL3. Interacts with RAC1; specifically stimulates RAC1 GTPase activity. Interacts (via F-BAR domain) with HOMER1. Interacts with ROBO1 and ROBO2. Interacts with FASLG. Interacts with PRMT5. In terms of processing, methylation at Arg-927 is required for the stimulation of cell migration, dimerization and localization at the plasma membrane protrusions.

Its subcellular location is the cell membrane. The protein localises to the cell projection. It localises to the dendritic spine. The protein resides in the postsynaptic density. It is found in the postsynaptic cell membrane. Its subcellular location is the lamellipodium. The protein localises to the cytoplasmic vesicle. It localises to the phagosome. The protein resides in the nucleus. It is found in the cytoplasm. Its subcellular location is the cytosol. Activity is strongly inhibited by SRGAP2C, which heterodimerize with SRGAP2/SRGAP2A, thereby reducing SRGAP2/SRGAP2A levels through proteasome-dependent degradation. Functionally, postsynaptic RAC1 GTPase activating protein (GAP) that plays a key role in neuronal morphogenesis and migration mainly during development of the cerebral cortex. Regulates excitatory and inhibitory synapse maturation and density in cortical pyramidal neurons. SRGAP2/SRGAP2A limits excitatory and inhibitory synapse density through its RAC1-specific GTPase activating activity, while it promotes maturation of both excitatory and inhibitory synapses through its ability to bind to the postsynaptic scaffolding protein HOMER1 at excitatory synapses, and the postsynaptic protein GPHN at inhibitory synapses. Mechanistically, acts by binding and deforming membranes, thereby regulating actin dynamics to regulate cell migration and differentiation. Promotes cell repulsion and contact inhibition of locomotion: localizes to protrusions with curved edges and controls the duration of RAC1 activity in contact protrusions. In non-neuronal cells, may also play a role in cell migration by regulating the formation of lamellipodia and filopodia. This Homo sapiens (Human) protein is SLIT-ROBO Rho GTPase-activating protein 2.